Here is a 303-residue protein sequence, read N- to C-terminus: Dehydrodolichyl diphosphate synthase 1 (303 aa).

A helical transmembrane segment spans residues 14–34 (LLFLFLIPCLFITSYIGFPVF).

This sequence belongs to the UPP synthase family. Mg(2+) is required as a cofactor. Expressed in low levels in the whole plant. Preferentially expressed in roots.

It is found in the endoplasmic reticulum membrane. The enzyme catalyses n isopentenyl diphosphate + (2E,6E)-farnesyl diphosphate = a di-trans,poly-cis-polyprenyl diphosphate + n diphosphate. It functions in the pathway protein modification; protein glycosylation. Catalyzes cis-prenyl chain elongation to produce the polyprenyl backbone of dolichol, a glycosyl carrier-lipid required for the biosynthesis of several classes of glycoprotein. This chain is Dehydrodolichyl diphosphate synthase 1 (DPS), found in Arabidopsis thaliana (Mouse-ear cress).